A 187-amino-acid chain; its full sequence is uncharacterized protein (187 aa).

The disordered stretch occupies residues 131 to 187 (VAEKKDQRKKKPKVKTQGENAPVAKSAGENSGKLEEQKDERKGIAKDIDDFFGGIDG). A compositionally biased stretch (basic and acidic residues) spans 162 to 179 (GKLEEQKDERKGIAKDID).

This is an uncharacterized protein from Haemophilus influenzae (Bacteriophage HP1).